Reading from the N-terminus, the 275-residue chain is Phosphatidylglycerol--prolipoprotein diacylglyceryl transferase (275 aa).

A run of 4 helical transmembrane segments spans residues 20 to 40 (FTIHWYGVIIASGVVLALLLA), 58 to 78 (LLWALPIAIICARIYYVVFQW), 88 to 108 (IIAIWDGGIAIYGAILGGFIV), and 118 to 138 (LSSWLMMDIIAPTLIMAQGIG). Position 139 (Arg-139) interacts with a 1,2-diacyl-sn-glycero-3-phospho-(1'-sn-glycerol). A run of 2 helical transmembrane segments spans residues 209 to 229 (GEIFLTYVMWYAFGRFFIEGM) and 239 to 259 (IRISQLLSIVFFVSALIILII).

This sequence belongs to the Lgt family.

It is found in the cell membrane. The catalysed reaction is L-cysteinyl-[prolipoprotein] + a 1,2-diacyl-sn-glycero-3-phospho-(1'-sn-glycerol) = an S-1,2-diacyl-sn-glyceryl-L-cysteinyl-[prolipoprotein] + sn-glycerol 1-phosphate + H(+). It participates in protein modification; lipoprotein biosynthesis (diacylglyceryl transfer). Functionally, catalyzes the transfer of the diacylglyceryl group from phosphatidylglycerol to the sulfhydryl group of the N-terminal cysteine of a prolipoprotein, the first step in the formation of mature lipoproteins. In Limosilactobacillus reuteri (strain DSM 20016) (Lactobacillus reuteri), this protein is Phosphatidylglycerol--prolipoprotein diacylglyceryl transferase.